Reading from the N-terminus, the 430-residue chain is Tektin-2 (430 aa).

Coiled-coil stretches lie at residues 75–162 and 226–380; these read KEML…FQHL and KNRA…IACK.

The protein belongs to the tektin family. As to quaternary structure, microtubule inner protein component of sperm flagellar doublet microtubules. May interact with CCDC172. Post-translationally, tyrosine phosphorylated. Ubiquitinated, leading to its degradation. Deubiquitinated by USP16, promoting its stability.

The protein resides in the cytoplasm. Its subcellular location is the cytoskeleton. It localises to the cilium axoneme. It is found in the flagellum axoneme. The protein localises to the microtubule organizing center. Microtubule inner protein (MIP) part of the dynein-decorated doublet microtubules (DMTs) in cilia and flagellar axoneme. Plays a key role in the assembly or attachment of the inner dynein arm to microtubules in sperm flagella and tracheal cilia. Forms filamentous polymers in the walls of ciliary and flagellar microtubules. The polypeptide is Tektin-2 (Tekt2) (Rattus norvegicus (Rat)).